The chain runs to 416 residues: Enterobactin exporter EntS (416 aa).

Topologically, residues 1–21 are cytoplasmic; sequence MNKQSWLLNLSLLKTHPAFRA. A helical membrane pass occupies residues 22-42; the sequence is VFLARFISIVSLGLLGVAVPV. Topologically, residues 43–55 are periplasmic; it reads QIQMMTHSTWQVG. A helical transmembrane segment spans residues 56–76; sequence LSVTLTGGAMFVGLMVGGVLA. The Cytoplasmic portion of the chain corresponds to 77–83; sequence DRYERKK. Residues 84–104 form a helical membrane-spanning segment; it reads VILLARGTCGIGFIGLCLNAL. Over 105–109 the chain is Periplasmic; that stretch reads LPEPS. Residues 110–130 form a helical membrane-spanning segment; that stretch reads LLAIYLLGLWDGFFASLGVTA. Topologically, residues 131-156 are cytoplasmic; that stretch reads LLAATPALVGRENLMQAGAITMLTVR. A helical transmembrane segment spans residues 157–177; it reads LGSVISPMIGGLLLATGGVAW. Residue Asn178 is a topological domain, periplasmic. Residues 179–199 traverse the membrane as a helical segment; sequence YGLAAAGTFITLLPLLSLPAL. The Cytoplasmic portion of the chain corresponds to 200–218; that stretch reads PPPPQPREHPLKSLLAGFR. Residues 219–239 form a helical membrane-spanning segment; it reads FLLASPLVGGIALLGGLLTMA. Topologically, residues 240–256 are periplasmic; the sequence is SAVRVLYPALADNWQMS. Residues 257–277 traverse the membrane as a helical segment; the sequence is AAQIGFLYAAIPLGAAIGALT. The Cytoplasmic segment spans residues 278-287; sequence SGKLAHSVRP. Residues 288–307 form a helical membrane-spanning segment; the sequence is GLLMLLSTLGAFLAIGLFGL. The Periplasmic segment spans residues 308–313; it reads MPMWIL. The helical transmembrane segment at 314-336 threads the bilayer; it reads GVVCLALFGWLSAVSSLLQYTML. Residues 337-356 are Cytoplasmic-facing; it reads QTQTPEAMLGRINGLWTAQN. The helical transmembrane segment at 357–377 threads the bilayer; it reads VTGDAIGAALLGGLGAMMTPV. Residue Ala378 is a topological domain, periplasmic. A helical membrane pass occupies residues 379 to 399; that stretch reads SASASGFGLLIIGVLLLLVLV. Residues 400–416 lie on the Cytoplasmic side of the membrane; the sequence is ELRRFRQTPPQVTASGS.

It belongs to the major facilitator superfamily. EntS (TC 2.A.1.38) family.

The protein localises to the cell inner membrane. Functionally, component of an export pathway for enterobactin. In Escherichia coli O6:K15:H31 (strain 536 / UPEC), this protein is Enterobactin exporter EntS.